The following is a 1191-amino-acid chain: Pyruvate-flavodoxin oxidoreductase (1191 aa).

2 consecutive 4Fe-4S ferredoxin-type domains span residues Gln-687–Val-716 and Tyr-744–Arg-773. Cys-696, Cys-699, Cys-702, Cys-706, Cys-753, Cys-756, Cys-759, Cys-763, Cys-825, Cys-828, Cys-853, and Cys-1085 together coordinate [4Fe-4S] cluster.

The protein belongs to the pyruvate:ferredoxin/flavodoxin oxidoreductase family. [4Fe-4S] cluster serves as cofactor.

The catalysed reaction is oxidized [flavodoxin] + pyruvate + CoA + 2 H(+) = reduced [flavodoxin] + acetyl-CoA + CO2. Its function is as follows. Oxidoreductase required for the transfer of electrons from pyruvate to flavodoxin, which reduces nitrogenase. The protein is Pyruvate-flavodoxin oxidoreductase (nifJ) of Rhodospirillum rubrum (strain ATCC 11170 / ATH 1.1.1 / DSM 467 / LMG 4362 / NCIMB 8255 / S1).